Here is a 1140-residue protein sequence, read N- to C-terminus: DNA damage-binding protein 1 (1140 aa).

Belongs to the DDB1 family. As to quaternary structure, component of the UV-DDB complex which includes DDB1 and DDB2; the heterodimer dimerizes to give rise to a heterotetramer when bound to damaged DNA. The UV-DDB complex interacts with monoubiquitinated histone H2A and binds to XPC via the DDB2 subunit. Component of numerous DCX (DDB1-CUL4-X-box) E3 ubiquitin-protein ligase complexes which consist of a core of DDB1, CUL4A or CUL4B and RBX1. DDB1 may recruit specific substrate targeting subunits to the DCX complex. These substrate targeting subunits are generally known as DCAF (DDB1- and CUL4-associated factor) or CDW (CUL4-DDB1-associated WD40-repeat) proteins. Interacts with Fbw5 and gig. May interact with ohgt.

It is found in the cytoplasm. The protein resides in the nucleus. It functions in the pathway protein modification; protein ubiquitination. Its function is as follows. Protein, which is both involved in DNA repair and protein ubiquitination, as part of the UV-DDB complex and DCX (DDB1-CUL4-X-box) complexes, respectively. Core component of the UV-DDB complex (UV-damaged DNA-binding protein complex), a complex that recognizes UV-induced DNA damage and recruit proteins of the nucleotide excision repair pathway (the NER pathway) to initiate DNA repair. The UV-DDB complex preferentially binds to cyclobutane pyrimidine dimers (CPD), 6-4 photoproducts (6-4 PP), apurinic sites and short mismatches. Also functions as a component of numerous distinct DCX (DDB1-CUL4-X-box) E3 ubiquitin-protein ligase complexes which mediate the ubiquitination and subsequent proteasomal degradation of target proteins. The functional specificity of the DCX E3 ubiquitin-protein ligase complex is determined by the variable substrate recognition component recruited by DDB1. Required for degradation of gig. Required for genomic stability in the face of endogenous DNA lesions and for the response to MMS-induced DNA damage. Required for normal wing development. The sequence is that of DNA damage-binding protein 1 (pic) from Drosophila melanogaster (Fruit fly).